We begin with the raw amino-acid sequence, 317 residues long: tRNA dimethylallyltransferase (317 aa).

An ATP-binding site is contributed by 16 to 23; that stretch reads GPTASGKS. 18-23 is a substrate binding site; it reads TASGKS. 3 interaction with substrate tRNA regions span residues 41–44, 165–169, and 247–252; these read DSAQ, QRIQR, and RCVGYR.

It belongs to the IPP transferase family. Monomer. The cofactor is Mg(2+).

The enzyme catalyses adenosine(37) in tRNA + dimethylallyl diphosphate = N(6)-dimethylallyladenosine(37) in tRNA + diphosphate. Catalyzes the transfer of a dimethylallyl group onto the adenine at position 37 in tRNAs that read codons beginning with uridine, leading to the formation of N6-(dimethylallyl)adenosine (i(6)A). The sequence is that of tRNA dimethylallyltransferase from Nitrosomonas europaea (strain ATCC 19718 / CIP 103999 / KCTC 2705 / NBRC 14298).